The sequence spans 164 residues: MVNSVVFFEITRDGKPLGRISIKLFADKIPKTAENFRALSTGEKGFRYKGSCFHRIIPGFMCQGGDFTRPNGTGDKSIYGEKFDDENLIRKHTGSGILSMANAGPNTNGSQFFICAAKTEWLDGKHVAFGKVKERVNIVEATEHFGYRNSKTSKKITIADCGQF.

In terms of domain architecture, PPIase cyclophilin-type spans 7-163; the sequence is FFEITRDGKP…KKITIADCGQ (157 aa).

The protein belongs to the cyclophilin-type PPIase family. PPIase A subfamily.

The protein resides in the cytoplasm. It catalyses the reaction [protein]-peptidylproline (omega=180) = [protein]-peptidylproline (omega=0). Its function is as follows. PPIases accelerate the folding of proteins. It catalyzes the cis-trans isomerization of proline imidic peptide bonds in oligopeptides. This Homo sapiens (Human) protein is Peptidyl-prolyl cis-trans isomerase A-like 4D.